A 270-amino-acid chain; its full sequence is Cell surface glycoprotein CD200 receptor 5 (270 aa).

An N-terminal signal peptide occupies residues Met-1–Cys-25. The Extracellular segment spans residues Thr-26 to Thr-241. An Ig-like V-type domain is found at Pro-39 to Gln-145. A glycan (N-linked (GlcNAc...) asparagine) is linked at Asn-44. 2 cysteine pairs are disulfide-bonded: Cys-59-Cys-129 and Cys-164-Cys-213. The region spanning Pro-134 to Asn-229 is the Ig-like C2-type domain. Asn-192 and Asn-221 each carry an N-linked (GlcNAc...) asparagine glycan. Residues Ile-242–Phe-262 traverse the membrane as a helical segment. Over Gln-263 to Thr-270 the chain is Cytoplasmic.

The protein belongs to the CD200R family.

The protein localises to the membrane. Its function is as follows. May not be a receptor for the CD200/OX2 cell surface glycoprotein. This is Cell surface glycoprotein CD200 receptor 5 (Cd200r5) from Mus musculus (Mouse).